The chain runs to 615 residues: Coagulation factor XII (615 aa).

The signal sequence occupies residues 1–19 (MRALLLLGFLLVSLESTLS). Residues 42–90 (VTGEPCHFPFQYHRQLYHKCTHKGRPGPQPWCATTPNFDQDQRWGYCLE) form the Fibronectin type-II domain. Cystine bridges form between C47–C73, C61–C88, C98–C110, C104–C119, C121–C130, C135–C163, C161–C170, C178–C189, C183–C198, C200–C209, C217–C295, C238–C277, and C266–C290. The EGF-like 1 domain maps to 94–131 (VKDHCSKHSPCQKGGTCVNMPSGPHCLCPQHLTGNHCQ). T109 carries O-linked (Fuc) threonine glycosylation. In terms of domain architecture, Fibronectin type-I spans 133–173 (EKCFEPQLLRFFHKNEIWYRTEQAAVARCQCKGPDAHCQRL). The EGF-like 2 domain occupies 174–210 (ASQACRTNPCLHGGRCLEVEGHRLCHCPVGYTGAFCD). The 79-residue stretch at 217–295 (CYDGRGLSYR…SWEYCDLAQC (79 aa)) folds into the Kringle domain. N-linked (GlcNAc...) asparagine glycosylation occurs at N249. A disordered region spans residues 298–359 (PTQAAPPTPV…SLTRNGPLSC (62 aa)). O-linked (GalNAc...) threonine glycosylation is found at T299 and T305. S308 carries O-linked (GalNAc...) serine glycosylation. Residues 317–326 (PAQPAPPKPQ) are compositionally biased toward pro residues. Low complexity predominate over residues 327–338 (PTTRTPPQSQTP). Residues T328, T329, and T337 are each glycosylated (O-linked (GalNAc...) threonine). Intrachain disulfides connect C359/C486, C397/C413, C405/C475, C436/C439, C500/C569, C532/C548, and C559/C590. Residues 373 to 614 (VVGGLVALRG…YLAWIREHTV (242 aa)) form the Peptidase S1 domain. H412 acts as the Charge relay system in catalysis. Residue N433 is glycosylated (N-linked (GlcNAc...) asparagine). The Charge relay system role is filled by D461. S563 functions as the Charge relay system in the catalytic mechanism.

It belongs to the peptidase S1 family. As to quaternary structure, interacts with HRG; the interaction, which is enhanced in the presence of zinc ions and inhibited by heparin-binding, inhibits factor XII autoactivation and contact-initiated coagulation. Interacts (inactive and activated) with D7L2, an anticoagulant protein from Anopheles gambiae. Interacts (activated) with iripin-8, a serine protease inhibitor from Ixodes ricinus saliva. Interacts (inactive and activated) (via amino acids 1-77) with triafestin-1 and triafestin-2, anticoagulant proteins from Triatoma infestans. Interacts (inactive and activated) (via amino acids 1-77) with short form salivary protein D7R1, an anticoagulant protein from Anopheles stephensi. Interacts (inactive and activated) (via fibronectin type II domain) with haemaphysalin, an anticoagulant protein from Haemaphysalis longicornis. In terms of processing, factor XII is activated by kallikrein in alpha-factor XIIa, which is further converted by trypsin into beta-factor XIIa. Alpha-factor XIIa is composed of an NH2-terminal heavy chain, called coagulation factor XIIa heavy chain, and a COOH-terminal light chain, called coagulation factor XIIa light chain, connected by a disulfide bond. Beta-factor XIIa is composed of 2 chains linked by a disulfide bond, an N-terminal nonapeptide, called beta-factor XIIa part 1, and coagulation factor XIIa light chain, also known in this context as beta-factor XIIa part 2. O- and N-glycosylated. The O-linked polysaccharides were not identified, but are probably the mucin type linked to GalNAc.

The protein localises to the secreted. The enzyme catalyses Selective cleavage of Arg-|-Ile bonds in factor VII to form factor VIIa and factor XI to form factor XIa.. With respect to regulation, activity is promoted in the presence of negatively charged surfaces. Functionally, factor XII is a serum glycoprotein that participates in the initiation of blood coagulation, fibrinolysis, and the generation of bradykinin and angiotensin. Prekallikrein is cleaved by factor XII to form kallikrein, which then cleaves factor XII first to alpha-factor XIIa and then trypsin cleaves it to beta-factor XIIa. Alpha-factor XIIa activates factor XI to factor XIa. The chain is Coagulation factor XII (F12) from Homo sapiens (Human).